The chain runs to 278 residues: Probable septum site-determining protein MinC (278 aa).

It belongs to the MinC family. As to quaternary structure, interacts with MinD and FtsZ.

In terms of biological role, cell division inhibitor that blocks the formation of polar Z ring septums. Rapidly oscillates between the poles of the cell to destabilize FtsZ filaments that have formed before they mature into polar Z rings. Prevents FtsZ polymerization. The sequence is that of Probable septum site-determining protein MinC from Gloeobacter violaceus (strain ATCC 29082 / PCC 7421).